Here is a 329-residue protein sequence, read N- to C-terminus: Prostaglandin reductase 1 (329 aa).

The residue at position 18 (Thr-18) is a Phosphothreonine. Ser-20 bears the Phosphoserine mark. NADP(+)-binding positions include 152 to 155 (GAVG), Lys-178, Tyr-193, Asn-217, 239 to 245 (CGAISVY), 270 to 272 (FVV), and Asn-321. At Lys-178 the chain carries N6-(2-hydroxyisobutyryl)lysine; alternate. N6-acetyllysine; alternate is present on Lys-178.

This sequence belongs to the NADP-dependent oxidoreductase L4BD family. As to quaternary structure, monomer or homodimer.

Its subcellular location is the cytoplasm. It carries out the reaction 13,14-dihydro-15-oxo-prostaglandin E1 + NADP(+) = 15-oxoprostaglandin E1 + NADPH + H(+). The catalysed reaction is 13,14-dihydro-15-oxo-prostaglandin E2 + NADP(+) = 15-oxoprostaglandin E2 + NADPH + H(+). The enzyme catalyses 13,14-dihydro-15-oxo-prostaglandin F1alpha + NADP(+) = 15-oxoprostaglandin F1alpha + NADPH + H(+). It catalyses the reaction 13,14-dihydro-15-oxo-PGF2alpha + NADP(+) = 15-oxoprostaglandin F2alpha + NADPH + H(+). It carries out the reaction leukotriene B4 + NADP(+) = 12-oxo-leukotriene B4 + NADPH + H(+). The catalysed reaction is 20-hydroxy-leukotriene B4 + NADP(+) = 12-oxo-20-hydroxy-leukotriene B4 + NADPH + H(+). The enzyme catalyses 6-trans-leukotriene B4 + NADP(+) = 12-oxo-(5S)-hydroxy-(6E,8E,10E,14Z)-eicosatetraenoate + NADPH + H(+). It catalyses the reaction (5S,12S)-dihydroxy-(6E,10E,12E,14Z)-eicosatetraenoate + NADP(+) = 12-oxo-(5S)-hydroxy-(6E,8E,10E,14Z)-eicosatetraenoate + NADPH + H(+). It carries out the reaction an n-alkanal + NADP(+) = an alk-2-enal + NADPH + H(+). The catalysed reaction is hexanal + NADP(+) = (E)-hex-2-enal + NADPH + H(+). The enzyme catalyses octanal + NADP(+) = (2E)-octenal + NADPH + H(+). It catalyses the reaction decanal + NADP(+) = (2E)-decenal + NADPH + H(+). It carries out the reaction dodecanal + NADP(+) = (2E)-dodecenal + NADPH + H(+). The catalysed reaction is 4-hydroxynonanal + NADP(+) = (E)-4-hydroxynon-2-enal + NADPH + H(+). The enzyme catalyses pentan-2-one + NADP(+) = (E)-pent-3-en-2-one + NADPH + H(+). It catalyses the reaction nonan-2-one + NADP(+) = (3E)-nonen-2-one + NADPH + H(+). In terms of biological role, NAD(P)H-dependent oxidoreductase involved in metabolic inactivation of pro- and anti-inflammatory eicosanoids: prostaglandins (PG), leukotrienes (LT) and lipoxins (LX). Catalyzes with high efficiency the reduction of the 13,14 double bond of 15-oxoPGs, including 15-oxo-PGE1, 15-oxo-PGE2, 15-oxo-PGF1-alpha and 15-oxo-PGF2-alpha. Catalyzes with lower efficiency the oxidation of the hydroxyl group at C12 of LTB4 and its derivatives, converting them into biologically less active 12-oxo-LTB4 metabolites. Reduces 15-oxo-LXA4 to 13,14 dihydro-15-oxo-LXA4, enhancing neutrophil recruitment at the inflammatory site. Plays a role in metabolic detoxification of alkenals and ketones. Reduces alpha,beta-unsaturated alkenals and ketones, particularly those with medium-chain length, showing highest affinity toward (2E)-decenal and (3E)-3-nonen-2-one. May inactivate 4-hydroxy-2-nonenal, a cytotoxic lipid constituent of oxidized low-density lipoprotein particles. This Bos taurus (Bovine) protein is Prostaglandin reductase 1 (PTGR1).